The chain runs to 599 residues: Tryptophan 2-C-methyltransferase (599 aa).

One can recognise a B12-binding domain in the interval 4-149 (KGTVALINPN…RALAEGRSAD (146 aa)). A disordered region spans residues 167–197 (RVAPPALDPRAAPAPSSSPSPSPAPSSSSAP). Residues 168–181 (VAPPALDPRAAPAP) are compositionally biased toward low complexity. The Radical SAM core domain occupies 239-492 (YREGGLGSIL…IEYERQFMFD (254 aa)). Positions 253, 257, and 260 each coordinate [4Fe-4S] cluster.

It depends on [4Fe-4S] cluster as a cofactor. Requires cob(II)alamin as cofactor.

The catalysed reaction is L-tryptophan + S-adenosyl-L-methionine = 2-methyl-L-tryptophan + S-adenosyl-L-homocysteine + H(+). Involved in the biosynthetic pathway of the antibiotic thiostrepton A. First, TsrM catalyzes the transfer of a methyl group from S-adenosyl methionine (SAM) to cobalamin, leading to the formation of methylcobalamin (CH3-cobalamin) and S-adenosyl-L-homocysteine (SAH). Then the methyl group is transferred to the C2 position of tryptophan (Trp) with the concerted action of the radical SAM [4Fe-4S] center, leading to the production of methyltryptophan. This is Tryptophan 2-C-methyltransferase from Streptomyces laurentii.